The following is a 364-amino-acid chain: Carbamoyl phosphate synthase small chain (364 aa).

CPSase regions lie at residues 1 to 167 and 1 to 171; these read MKRQ…PSPG and MKRQ…RGER. Ser45, Gly219, and Gly221 together coordinate L-glutamine. The 188-residue stretch at 171–358 folds into the Glutamine amidotransferase type-1 domain; that stretch reads RIVLIDFGMK…LALIREFNKK (188 aa). Residue Cys246 is the Nucleophile of the active site. L-glutamine is bound by residues Leu247, Gln250, Asn288, Gly290, and Tyr291. Residues His331 and Glu333 contribute to the active site.

This sequence belongs to the CarA family. Composed of two chains; the small (or glutamine) chain promotes the hydrolysis of glutamine to ammonia, which is used by the large (or ammonia) chain to synthesize carbamoyl phosphate. Tetramer of heterodimers (alpha,beta)4.

The catalysed reaction is hydrogencarbonate + L-glutamine + 2 ATP + H2O = carbamoyl phosphate + L-glutamate + 2 ADP + phosphate + 2 H(+). It carries out the reaction L-glutamine + H2O = L-glutamate + NH4(+). It functions in the pathway amino-acid biosynthesis; L-arginine biosynthesis; carbamoyl phosphate from bicarbonate: step 1/1. Its pathway is pyrimidine metabolism; UMP biosynthesis via de novo pathway; (S)-dihydroorotate from bicarbonate: step 1/3. Small subunit of the glutamine-dependent carbamoyl phosphate synthetase (CPSase). CPSase catalyzes the formation of carbamoyl phosphate from the ammonia moiety of glutamine, carbonate, and phosphate donated by ATP, constituting the first step of 2 biosynthetic pathways, one leading to arginine and/or urea and the other to pyrimidine nucleotides. The small subunit (glutamine amidotransferase) binds and cleaves glutamine to supply the large subunit with the substrate ammonia. This is Carbamoyl phosphate synthase small chain from Bacillus caldolyticus.